A 244-amino-acid polypeptide reads, in one-letter code: Cell division protein ZapD (244 aa).

Belongs to the ZapD family. As to quaternary structure, interacts with FtsZ.

It is found in the cytoplasm. In terms of biological role, cell division factor that enhances FtsZ-ring assembly. Directly interacts with FtsZ and promotes bundling of FtsZ protofilaments, with a reduction in FtsZ GTPase activity. This is Cell division protein ZapD from Shewanella sp. (strain MR-4).